The following is a 64-amino-acid chain: DNA-binding protein 7d (64 aa).

N6-methyllysine is present on residues K5, K7, K61, K63, and K64.

It belongs to the 7 kDa DNA-binding/endoribonuclease P2 family. In terms of assembly, monomer.

It is found in the cytoplasm. In terms of biological role, can constrain negative DNA supercoils. May be involved in maintaining the integrity of the genome at high temperature. Stimulates the Holliday junction cleavage activity of Hjc. This is DNA-binding protein 7d (sso7d) from Saccharolobus solfataricus (strain ATCC 35092 / DSM 1617 / JCM 11322 / P2) (Sulfolobus solfataricus).